A 312-amino-acid chain; its full sequence is uncharacterized protein (312 aa).

112–118 (LIGLPMV) contributes to the ATP binding site.

Belongs to the MurCDEF family.

This is an uncharacterized protein from Methanothermobacter thermautotrophicus (strain ATCC 29096 / DSM 1053 / JCM 10044 / NBRC 100330 / Delta H) (Methanobacterium thermoautotrophicum).